Here is a 316-residue protein sequence, read N- to C-terminus: Neuroguidin (316 aa).

2 disordered regions span residues serine 143–tyrosine 172 and serine 280–histidine 316. Residues alanine 145 to alanine 157 are compositionally biased toward acidic residues. The span at lysine 297 to histidine 316 shows a compositional bias: basic residues.

It belongs to the SAS10 family. Part of the small subunit (SSU) processome, composed of more than 70 proteins and the RNA chaperone small nucleolar RNA (snoRNA) U3.

The protein localises to the nucleus. Its subcellular location is the nucleolus. The protein resides in the chromosome. It is found in the centromere. It localises to the cytoplasm. The protein localises to the cell projection. Its subcellular location is the axon. The protein resides in the dendrite. It is found in the filopodium. In terms of biological role, part of the small subunit (SSU) processome, first precursor of the small eukaryotic ribosomal subunit. During the assembly of the SSU processome in the nucleolus, many ribosome biogenesis factors, an RNA chaperone and ribosomal proteins associate with the nascent pre-rRNA and work in concert to generate RNA folding, modifications, rearrangements and cleavage as well as targeted degradation of pre-ribosomal RNA by the RNA exosome. Its dissociation from the complex determines the transition from state pre-A1 to state pre-A1*. May inhibit mRNA translation. The sequence is that of Neuroguidin (ngdn) from Xenopus tropicalis (Western clawed frog).